The following is a 252-amino-acid chain: 5'-nucleotidase SurE (252 aa).

A divalent metal cation is bound by residues Asp-8, Asp-9, Ser-42, and Asn-94.

Belongs to the SurE nucleotidase family. Requires a divalent metal cation as cofactor.

Its subcellular location is the cytoplasm. The catalysed reaction is a ribonucleoside 5'-phosphate + H2O = a ribonucleoside + phosphate. Its function is as follows. Nucleotidase that shows phosphatase activity on nucleoside 5'-monophosphates. The chain is 5'-nucleotidase SurE from Ehrlichia ruminantium (strain Gardel).